The sequence spans 323 residues: Tyrosine--tRNA ligase (323 aa).

Position 36 (Tyr36) interacts with L-tyrosine. The 'HIGH' region signature appears at 41–49; sequence PSGEIHLGH. Tyr158, Gln162, Asp165, and Gln180 together coordinate L-tyrosine. A 'KMSKS' region motif is present at residues 214–218; sequence KMSSS. Ser217 lines the ATP pocket.

Belongs to the class-I aminoacyl-tRNA synthetase family. TyrS type 3 subfamily. In terms of assembly, homodimer.

The protein resides in the cytoplasm. The enzyme catalyses tRNA(Tyr) + L-tyrosine + ATP = L-tyrosyl-tRNA(Tyr) + AMP + diphosphate + H(+). Catalyzes the attachment of tyrosine to tRNA(Tyr) in a two-step reaction: tyrosine is first activated by ATP to form Tyr-AMP and then transferred to the acceptor end of tRNA(Tyr). This Archaeoglobus fulgidus (strain ATCC 49558 / DSM 4304 / JCM 9628 / NBRC 100126 / VC-16) protein is Tyrosine--tRNA ligase.